Here is a 95-residue protein sequence, read N- to C-terminus: Protein TusB (95 aa).

The protein belongs to the DsrH/TusB family. Heterohexamer, formed by a dimer of trimers. The hexameric TusBCD complex contains 2 copies each of TusB, TusC and TusD. The TusBCD complex interacts with TusE.

It is found in the cytoplasm. Functionally, part of a sulfur-relay system required for 2-thiolation of 5-methylaminomethyl-2-thiouridine (mnm(5)s(2)U) at tRNA wobble positions. This chain is Protein TusB, found in Pectobacterium carotovorum subsp. carotovorum (strain PC1).